We begin with the raw amino-acid sequence, 111 residues long: Notch-regulated ankyrin repeat-containing protein B (111 aa).

ANK repeat units lie at residues glutamate 47 to leucine 76 and aspartate 80 to serine 109.

It belongs to the NRARP family.

Its function is as follows. Regulates independently canonical Wnt and Notch signaling by modulating LEF1 and Notch protein turnover. Stabilizes LEF1, a pivotal transcription factor in the Wnt signaling cascade, by blocking its ubiquitination. Involved in angiogenesis; involved in intersegmental vessel patterning during development. The protein is Notch-regulated ankyrin repeat-containing protein B (nrarpb) of Danio rerio (Zebrafish).